Consider the following 129-residue polypeptide: Lysozyme C (129 aa).

The 129-residue stretch at 1–129 (KVFSKCELAH…LSEYLASCNL (129 aa)) folds into the C-type lysozyme domain. Disulfide bonds link cysteine 6-cysteine 127, cysteine 30-cysteine 115, cysteine 65-cysteine 80, and cysteine 76-cysteine 94. Catalysis depends on residues glutamate 35 and aspartate 53. Ca(2+) is bound by residues lysine 82, aspartate 85, asparagine 87, aspartate 90, and aspartate 91.

Belongs to the glycosyl hydrolase 22 family. In terms of assembly, monomer. Ca(2+) serves as cofactor.

The catalysed reaction is Hydrolysis of (1-&gt;4)-beta-linkages between N-acetylmuramic acid and N-acetyl-D-glucosamine residues in a peptidoglycan and between N-acetyl-D-glucosamine residues in chitodextrins.. Its function is as follows. Lysozymes have primarily a bacteriolytic function; those in tissues and body fluids are associated with the monocyte-macrophage system and enhance the activity of immunoagents. The sequence is that of Lysozyme C (LYZ) from Equus asinus (Donkey).